Consider the following 148-residue polypeptide: Large ribosomal subunit protein bL9 (148 aa).

This sequence belongs to the bacterial ribosomal protein bL9 family.

Binds to the 23S rRNA. This Listeria monocytogenes serotype 4b (strain CLIP80459) protein is Large ribosomal subunit protein bL9.